The chain runs to 1396 residues: DNA-directed RNA polymerase subunit beta' (1396 aa).

Positions 72, 74, 87, and 90 each coordinate Zn(2+). Residues aspartate 463, aspartate 465, and aspartate 467 each coordinate Mg(2+). Residues cysteine 814, cysteine 889, cysteine 896, and cysteine 899 each coordinate Zn(2+).

This sequence belongs to the RNA polymerase beta' chain family. In terms of assembly, the RNAP catalytic core consists of 2 alpha, 1 beta, 1 beta' and 1 omega subunit. When a sigma factor is associated with the core the holoenzyme is formed, which can initiate transcription. Mg(2+) is required as a cofactor. Zn(2+) serves as cofactor.

The catalysed reaction is RNA(n) + a ribonucleoside 5'-triphosphate = RNA(n+1) + diphosphate. In terms of biological role, DNA-dependent RNA polymerase catalyzes the transcription of DNA into RNA using the four ribonucleoside triphosphates as substrates. In Chlamydia trachomatis serovar L2 (strain ATCC VR-902B / DSM 19102 / 434/Bu), this protein is DNA-directed RNA polymerase subunit beta'.